The sequence spans 222 residues: MEEWYGQVAPREKLLKYGAAVLTDAELLAIFLRTGIPGMHVMQMAEYLIEEFGSLYGLISADYQALCAQKGIGVSKYSQIQAIAELAGRCFSSHLMQESVLQNPEITQKFLQNILSHREREIFLVMFLDNQHRVIRHEEMFTGTISSVEIHPREIVREALKVNAAALILAHNHPSGKAEPSQADRLMTTQVIKACSLLDIRVLDHLVVGRGECVSFAERGWL.

In terms of domain architecture, MPN spans 100–222; it reads VLQNPEITQK…CVSFAERGWL (123 aa). Residues histidine 171, histidine 173, and aspartate 184 each coordinate Zn(2+). The JAMM motif motif lies at 171-184; that stretch reads HNHPSGKAEPSQAD.

Belongs to the UPF0758 family. YicR subfamily.

The chain is UPF0758 protein YE0063 from Yersinia enterocolitica serotype O:8 / biotype 1B (strain NCTC 13174 / 8081).